The following is a 495-amino-acid chain: Glutamyl-tRNA(Gln) amidotransferase subunit A (495 aa).

Catalysis depends on charge relay system residues Lys-75 and Ser-150. Ser-174 (acyl-ester intermediate) is an active-site residue.

Belongs to the amidase family. GatA subfamily. As to quaternary structure, heterotrimer of A, B and C subunits.

The enzyme catalyses L-glutamyl-tRNA(Gln) + L-glutamine + ATP + H2O = L-glutaminyl-tRNA(Gln) + L-glutamate + ADP + phosphate + H(+). Its function is as follows. Allows the formation of correctly charged Gln-tRNA(Gln) through the transamidation of misacylated Glu-tRNA(Gln) in organisms which lack glutaminyl-tRNA synthetase. The reaction takes place in the presence of glutamine and ATP through an activated gamma-phospho-Glu-tRNA(Gln). The sequence is that of Glutamyl-tRNA(Gln) amidotransferase subunit A from Ralstonia nicotianae (strain ATCC BAA-1114 / GMI1000) (Ralstonia solanacearum).